The primary structure comprises 465 residues: Hexokinase-4 (465 aa).

In terms of domain architecture, Hexokinase spans 10-454 (ATKKEKVEQI…SGRGAALVSA (445 aa)). Residues 67–203 (EGSEVGDFLS…DFEMDVVAMV (137 aa)) form a hexokinase small subdomain region. 78-83 (DLGGTN) is a binding site for ATP. Substrate contacts are provided by residues 151–152 (SF), 168–169 (TK), and 204–205 (ND). The interval 204-443 (NDTVATMISC…CEITFIESEE (240 aa)) is hexokinase large subdomain. Thr-228 contributes to the ATP binding site. Substrate is bound by residues Asn-231, Glu-256, and Glu-290. Residues 295-296 (GK), 332-336 (TRFVS), and 411-415 (SVYKL) contribute to the ATP site.

Belongs to the hexokinase family. As to quaternary structure, monomer. Interacts with MIDN; the interaction occurs preferentially at low glucose levels and results in inhibition of hexokinase activity. Interacts with GCKR; leading to sequestration in the nucleus. In terms of tissue distribution, expression is restricted to the liver and pancreatic islets (at protein level).

It localises to the cytoplasm. It is found in the nucleus. The protein resides in the mitochondrion. It catalyses the reaction a D-hexose + ATP = a D-hexose 6-phosphate + ADP + H(+). It carries out the reaction D-fructose + ATP = D-fructose 6-phosphate + ADP + H(+). The catalysed reaction is D-glucose + ATP = D-glucose 6-phosphate + ADP + H(+). The enzyme catalyses D-mannose + ATP = D-mannose 6-phosphate + ADP + H(+). It participates in carbohydrate metabolism; hexose metabolism. The protein operates within carbohydrate degradation; glycolysis; D-glyceraldehyde 3-phosphate and glycerone phosphate from D-glucose: step 1/4. Subject to allosteric regulation. Low glucose and high fructose-6-phosphate triggers association with the inhibitor GCKR followed by sequestration in the nucleus. Catalyzes the phosphorylation of hexose, such as D-glucose, D-fructose and D-mannose, to hexose 6-phosphate (D-glucose 6-phosphate, D-fructose 6-phosphate and D-mannose 6-phosphate, respectively). Compared to other hexokinases, has a weak affinity for D-glucose, and is effective only when glucose is abundant. Mainly expressed in pancreatic beta cells and the liver and constitutes a rate-limiting step in glucose metabolism in these tissues. Since insulin secretion parallels glucose metabolism and the low glucose affinity of GCK ensures that it can change its enzymatic activity within the physiological range of glucose concentrations, GCK acts as a glucose sensor in the pancreatic beta cell. In pancreas, plays an important role in modulating insulin secretion. In liver, helps to facilitate the uptake and conversion of glucose by acting as an insulin-sensitive determinant of hepatic glucose usage. Required to provide D-glucose 6-phosphate for the synthesis of glycogen. Mediates the initial step of glycolysis by catalyzing phosphorylation of D-glucose to D-glucose 6-phosphate. The polypeptide is Hexokinase-4 (Rattus norvegicus (Rat)).